The primary structure comprises 430 residues: Pre-B-cell leukemia transcription factor 2 (430 aa).

The disordered stretch occupies residues 1–52 (MDERLLGPPPPGGGRGGLGLVSGEPGGPGEPPGGGDPGGGSGGVPGGRGKQD). Residues 13 to 48 (GGRGGLGLVSGEPGGPGEPPGGGDPGGGSGGVPGGR) are compositionally biased toward gly residues. The 196-residue stretch at 48-243 (RGKQDIGDIL…VMILRSRFLD (196 aa)) folds into the PBC domain. Residues 55 to 134 (DILQQIMTIT…EGVAGPEKGG (80 aa)) are PBC-A. Phosphoserine is present on residues Ser-136, Ser-151, and Ser-159. A PBC-B region spans residues 137–243 (AAAAAAAAAS…VMILRSRFLD (107 aa)). Positions 244-306 (ARRKRRNFSK…NKRIRYKKNI (63 aa)) form a DNA-binding region, homeobox; TALE-type. 2 disordered regions span residues 326 to 347 (QGGH…GGSF) and 378 to 430 (SMGP…DTSN). Ser-330 bears the Phosphoserine mark. A compositionally biased stretch (gly residues) spans 380-392 (GPGGYGDNLGGGQ). Ser-395 is subject to Phosphoserine. A compositionally biased stretch (polar residues) spans 403–418 (GSWQEAVTPSSVTSPT).

It belongs to the TALE/PBX homeobox family. In terms of assembly, forms heterodimers with MEIS1 and heterotrimers with MEIS1 and HOXA9. Interacts with PBXIP1. In terms of tissue distribution, ubiquitously expressed.

Its subcellular location is the nucleus. Transcriptional activator that binds the sequence 5'-ATCAATCAA-3'. Activates transcription of PF4 in complex with MEIS1. This is Pre-B-cell leukemia transcription factor 2 (PBX2) from Homo sapiens (Human).